The sequence spans 146 residues: Sordarin/hypoxysordarin biosynthesis cluster protein G (146 aa).

It participates in antibiotic biosynthesis. Its function is as follows. Part of the gene cluster that mediates the biosynthesis of sordarin and hypoxysordarin, glycoside antibiotics with a unique tetracyclic diterpene aglycone structure. First, the geranylgeranyl diphosphate synthase sdnC constructs GGDP from farnesyl diphosphate and isopentenyl diphosphate. The diterpene cyclase sdnA then catalyzes the cyclization of GGDP to afford cycloaraneosene. Cycloaraneosene is then hydroxylated four times by the putative cytochrome P450 monooxygenases sdnB, sdnE, sdnF and sdnH to give a hydroxylated cycloaraneosene derivative such as cycloaraneosene-8,9,13,19-tetraol. Although the order of the hydroxylations is unclear, at least C8, C9 and C13 of the cycloaraneosene skeleton are hydroxylated before the sordaricin formation. Dehydration of the 13-hydroxy group of the hydroxylated cycloaraneosene derivative might be catalyzed by an unassigned hypothetical protein such as sdnG and sdnP to construct the cyclopentadiene moiety. The FAD-dependent oxidoreductase sdnN is proposed to catalyze the oxidation at C9 of the hydroxylated cycloaraneosene derivative and also catalyze the Baeyer-Villiger oxidation to give the lactone intermediate. The presumed lactone intermediate would be hydrolyzed to give an acrolein moiety and a carboxylate moiety. Then, [4+2]cycloaddition would occur between the acrolein moiety and the cyclopentadiene moiety to give sordaricin. SdnN might also be involved in the [4+2]cycloaddition after the hypothesized oxidation to accommodate the oxidized product and prompt the [4+2]cycloaddition. GDP-6-deoxy-D-altrose may be biosynthesized from GDP-D-mannose by the putative GDP-mannose-4,6-dehydratase sdnI and the short-chain dehydrogenase sdnK. The glycosyltransferase sdnJ catalyzes the attachment of 6-deoxy-D-altrose onto the 19-hydroxy group of sordaricin to give 4'-O-demethylsordarin. The methyltransferase sdnD would complete the biosynthesis of sordarin. Sordarin can be further modified into hypoxysordarin. The unique acyl chain at the 3'-hydroxy group of hypoxysordarin would be constructed by an iterative type I PKS sdnO and the trans-acting polyketide methyltransferase sdnL. SdnL would be responsible for the introduction of an alpha-methyl group of the polyketide chain. Alternatively, the beta-lactamase-like protein sdnR might be responsible for the cleavage and transfer of the polyketide chain from the PKS sdnO to sordarin. Two putative cytochrome P450 monooxygenases, sdnQ and sdnT, might catalyze the epoxidations of the polyketide chain to complete the biosynthesis of hypoxysordarin. Transcriptional regulators sdnM and sdnS are presumably encoded for the transcriptional regulation of the expression of the sdn gene cluster. In Sordaria araneosa (Pleurage araneosa), this protein is Sordarin/hypoxysordarin biosynthesis cluster protein G.